The primary structure comprises 51 residues: uncharacterized protein (51 aa).

This is an uncharacterized protein from Escherichia coli (strain K12).